The chain runs to 699 residues: Elongation factor G (699 aa).

One can recognise a tr-type G domain in the interval 8-287; the sequence is EKLRNIGIVA…AVIDYLPSPI (280 aa). GTP is bound by residues 17–24, 85–89, and 139–142; these read AHIDAGKT, DTPGH, and NKMD.

It belongs to the TRAFAC class translation factor GTPase superfamily. Classic translation factor GTPase family. EF-G/EF-2 subfamily.

It localises to the cytoplasm. In terms of biological role, catalyzes the GTP-dependent ribosomal translocation step during translation elongation. During this step, the ribosome changes from the pre-translocational (PRE) to the post-translocational (POST) state as the newly formed A-site-bound peptidyl-tRNA and P-site-bound deacylated tRNA move to the P and E sites, respectively. Catalyzes the coordinated movement of the two tRNA molecules, the mRNA and conformational changes in the ribosome. This Aquifex aeolicus (strain VF5) protein is Elongation factor G (fusA).